The sequence spans 273 residues: MDFLIVLKALMMGLVEGFTEFLPISSTGHLIVFGNLIGFHSNHKVFEIAIQLGAVLAVVFEYRQRFSNVLHGVGKDRKANRFVLNLAIAFIPAAVMGLLFDKQIKEYLFNPLSVAVMLVLGGFFILWVEKRQSRAEPKIADVDALRPIDALMIGVAQVFALVPGTSRSGSTVMGGMFWGIERKTATEFSFFLAVPMMVAATAYDVLKHYRFFTLHDVGLILIGFIAAFVSGLVAVKALLKFVSKKNYIPFAYYRIVFGIVIIILWLSGWISWE.

7 helical membrane passes run Gly-13–Asn-35, Val-45–Tyr-62, Phe-82–Lys-102, Leu-108–Val-128, Thr-186–Leu-206, Leu-219–Leu-239, and Phe-250–Ile-270.

The protein belongs to the UppP family.

Its subcellular location is the cell inner membrane. The catalysed reaction is di-trans,octa-cis-undecaprenyl diphosphate + H2O = di-trans,octa-cis-undecaprenyl phosphate + phosphate + H(+). Functionally, catalyzes the dephosphorylation of undecaprenyl diphosphate (UPP). Confers resistance to bacitracin. In Neisseria gonorrhoeae (strain NCCP11945), this protein is Undecaprenyl-diphosphatase.